Consider the following 100-residue polypeptide: Urease subunit gamma (100 aa).

Belongs to the urease gamma subunit family. Heterotrimer of UreA (gamma), UreB (beta) and UreC (alpha) subunits. Three heterotrimers associate to form the active enzyme.

The protein localises to the cytoplasm. The enzyme catalyses urea + 2 H2O + H(+) = hydrogencarbonate + 2 NH4(+). It participates in nitrogen metabolism; urea degradation; CO(2) and NH(3) from urea (urease route): step 1/1. The chain is Urease subunit gamma from Acinetobacter baumannii (strain SDF).